A 220-amino-acid chain; its full sequence is Putative DNA repair glycosylase MJ1434 (220 aa).

4 residues coordinate [4Fe-4S] cluster: C202, C208, C211, and C217.

This sequence belongs to the Nth/MutY family. Requires [4Fe-4S] cluster as cofactor.

This chain is Putative DNA repair glycosylase MJ1434, found in Methanocaldococcus jannaschii (strain ATCC 43067 / DSM 2661 / JAL-1 / JCM 10045 / NBRC 100440) (Methanococcus jannaschii).